Here is a 215-residue protein sequence, read N- to C-terminus: NADH-quinone oxidoreductase subunit C (215 aa).

The protein belongs to the complex I 30 kDa subunit family. In terms of assembly, NDH-1 is composed of 14 different subunits. Subunits NuoB, C, D, E, F, and G constitute the peripheral sector of the complex.

Its subcellular location is the cell inner membrane. The catalysed reaction is a quinone + NADH + 5 H(+)(in) = a quinol + NAD(+) + 4 H(+)(out). Functionally, NDH-1 shuttles electrons from NADH, via FMN and iron-sulfur (Fe-S) centers, to quinones in the respiratory chain. The immediate electron acceptor for the enzyme in this species is believed to be ubiquinone. Couples the redox reaction to proton translocation (for every two electrons transferred, four hydrogen ions are translocated across the cytoplasmic membrane), and thus conserves the redox energy in a proton gradient. The sequence is that of NADH-quinone oxidoreductase subunit C from Methylobacterium radiotolerans (strain ATCC 27329 / DSM 1819 / JCM 2831 / NBRC 15690 / NCIMB 10815 / 0-1).